Reading from the N-terminus, the 393-residue chain is Acetylornithine aminotransferase 1 (393 aa).

Arginine 131 is a N(2)-acetyl-L-ornithine binding site. 215 to 218 is a pyridoxal 5'-phosphate binding site; sequence DEVQ. N6-(pyridoxal phosphate)lysine is present on lysine 244. Residue threonine 272 coordinates N(2)-acetyl-L-ornithine. Threonine 273 is a binding site for pyridoxal 5'-phosphate.

It belongs to the class-III pyridoxal-phosphate-dependent aminotransferase family. ArgD subfamily. As to quaternary structure, homodimer. It depends on pyridoxal 5'-phosphate as a cofactor.

It localises to the cytoplasm. The enzyme catalyses N(2)-acetyl-L-ornithine + 2-oxoglutarate = N-acetyl-L-glutamate 5-semialdehyde + L-glutamate. Its pathway is amino-acid biosynthesis; L-arginine biosynthesis; N(2)-acetyl-L-ornithine from L-glutamate: step 4/4. This chain is Acetylornithine aminotransferase 1, found in Bordetella pertussis (strain Tohama I / ATCC BAA-589 / NCTC 13251).